We begin with the raw amino-acid sequence, 486 residues long: G2/mitotic-specific cyclin-4 (486 aa).

2 disordered regions span residues 1-80 (MRSY…SSNK) and 105-126 (VLLN…DKEN). Over residues 25–41 (ANLSSNHTTAGQPSTSS) the composition is skewed to polar residues. The span at 108 to 123 (NDDDDETDDEFDDEED) shows a compositional bias: acidic residues. Residues 122 to 184 (EDKENRYHDL…QSHTQDMRSI (63 aa)) are a coiled coil. The 126-residue stretch at 234–359 (EIFNYLHELE…FMIDVLEFDL (126 aa)) folds into the Cyclin N-terminal domain.

This sequence belongs to the cyclin family. Cyclin AB subfamily. Interacts with IQG1.

Functionally, 2/mitotic-specific cyclin essential for the control of the cell cycle at the G2/M (mitosis) transition. G2/M cyclins accumulate steadily during G2 and are abruptly destroyed at mitosis. Degradation is necessary for the cell to exit from mitosis. Plays a role in morphogenesis by negatively regulating polarized growth. Through binding to CDC28 regulates cytokinesis, partly by phosphorylation of the actomyosin ring component IQG1. This is G2/mitotic-specific cyclin-4 (CLB4) from Candida albicans (strain SC5314 / ATCC MYA-2876) (Yeast).